A 59-amino-acid polypeptide reads, in one-letter code: Potassium channel toxin alpha-KTx 1.1 (59 aa).

An N-terminal signal peptide occupies residues 1–22 (MKILSVLLLALIICSIVGWSEA). Residue Q23 is modified to Pyrrolidone carboxylic acid. 3 cysteine pairs are disulfide-bonded: C29–C50, C35–C55, and C39–C57. The interaction with Ca(2+)-activated K(+) channels stretch occupies residues 48 to 55 (GKCMNKKC).

It belongs to the short scorpion toxin superfamily. Potassium channel inhibitor family. Alpha-KTx 01 subfamily. Expressed by the venom gland.

Its subcellular location is the secreted. Functionally, this toxin inhibits numerous potassium channels: shaker (Ki=227 nM), Kv1.2/KCNA2 (nanomolar range), Kv1.3/KCNA3 (nanomolar range), Kv1.5/KCNA5 (Kd&gt;100 nM), Kv1.6/KCNA6 (Ki=22 nM), KCa1.1/KCNMA1 (IC(50)=5.9 nM). It blocks channel activity by a simple bimolecular inhibition process. It also shows a weak interaction with nicotinic acetylcholine receptors (nAChR), suggesting it may weakly inhibit it. It also exhibits pH-specific antimicrobial activities against bacteria (B.subtilis, E.coli and S.aureus) and the fungus C.albicans. The chain is Potassium channel toxin alpha-KTx 1.1 from Leiurus hebraeus (Hebrew deathstalker scorpion).